Reading from the N-terminus, the 197-residue chain is Pyridoxal 5'-phosphate synthase subunit PdxT (197 aa).

53–55 (GES) lines the L-glutamine pocket. C85 acts as the Nucleophile in catalysis. Residues R114 and 142–143 (IR) contribute to the L-glutamine site. Residues H179 and E181 each act as charge relay system in the active site.

The protein belongs to the glutaminase PdxT/SNO family. As to quaternary structure, in the presence of PdxS, forms a dodecamer of heterodimers. Only shows activity in the heterodimer.

It catalyses the reaction aldehydo-D-ribose 5-phosphate + D-glyceraldehyde 3-phosphate + L-glutamine = pyridoxal 5'-phosphate + L-glutamate + phosphate + 3 H2O + H(+). The catalysed reaction is L-glutamine + H2O = L-glutamate + NH4(+). Its pathway is cofactor biosynthesis; pyridoxal 5'-phosphate biosynthesis. Functionally, catalyzes the hydrolysis of glutamine to glutamate and ammonia as part of the biosynthesis of pyridoxal 5'-phosphate. The resulting ammonia molecule is channeled to the active site of PdxS. The sequence is that of Pyridoxal 5'-phosphate synthase subunit PdxT from Thermococcus gammatolerans (strain DSM 15229 / JCM 11827 / EJ3).